The sequence spans 600 residues: Aspartate--tRNA(Asp/Asn) ligase (600 aa).

Residue glutamate 187 coordinates L-aspartate. The tract at residues 211 to 214 (QIFK) is aspartate. L-aspartate contacts are provided by arginine 233 and histidine 463. 233–235 (RDE) contacts ATP. Glutamate 497 serves as a coordination point for ATP. L-aspartate is bound at residue arginine 504. 549 to 552 (GVDR) contacts ATP.

Belongs to the class-II aminoacyl-tRNA synthetase family. Type 1 subfamily. Homodimer.

Its subcellular location is the cytoplasm. The enzyme catalyses tRNA(Asx) + L-aspartate + ATP = L-aspartyl-tRNA(Asx) + AMP + diphosphate. Functionally, aspartyl-tRNA synthetase with relaxed tRNA specificity since it is able to aspartylate not only its cognate tRNA(Asp) but also tRNA(Asn). Reaction proceeds in two steps: L-aspartate is first activated by ATP to form Asp-AMP and then transferred to the acceptor end of tRNA(Asp/Asn). The protein is Aspartate--tRNA(Asp/Asn) ligase of Wolbachia pipientis subsp. Culex pipiens (strain wPip).